Reading from the N-terminus, the 46-residue chain is Sperm protamine P1 (46 aa).

The protein belongs to the protamine P1 family. As to expression, testis.

Its subcellular location is the nucleus. It is found in the chromosome. Protamines substitute for histones in the chromatin of sperm during the haploid phase of spermatogenesis. They compact sperm DNA into a highly condensed, stable and inactive complex. The chain is Sperm protamine P1 (PRM1) from Hypsugo savii (Savi's pipistrelle).